We begin with the raw amino-acid sequence, 773 residues long: Linolenate 9R-lipoxygenase (773 aa).

Residues 176-773 enclose the Lipoxygenase domain; the sequence is YEWVDSKKKS…LEDLMMSINI (598 aa). Fe cation contacts are provided by His515, His520, and Ile773.

This sequence belongs to the lipoxygenase family.

It carries out the reaction (9Z,12Z,15Z)-octadecatrienoate + O2 = (9R,10E,12Z,15Z)-9-hydroperoxyoctadeca-10,12,15-trienoate. The protein operates within lipid metabolism; oxylipin biosynthesis. Its function is as follows. Catalyzes the conversion of alpha-linoleate to (9R,10E,12Z,15Z)-9-hydroperoxyoctadeca-10,12,15-trienoate in oxylipin biosynthesis. Also converts alpha-linoleate to (9R,10E,12Z)-9-hydroperoxyoctadeca-10,12-dienoate. This chain is Linolenate 9R-lipoxygenase, found in Nostoc sp. (strain PCC 7120 / SAG 25.82 / UTEX 2576).